The following is a 673-amino-acid chain: Putative lipase atg15 (673 aa).

Residues 1-7 (MPRKRSR) are Cytoplasmic-facing. The helical; Signal-anchor for type II membrane protein transmembrane segment at 8–28 (FELSIHSLLLSVAVLSGAAYA) threads the bilayer. Over 29-673 (SGYYPPSQQV…AVTSAPTPTS (645 aa)) the chain is Lumenal. N-linked (GlcNAc...) asparagine glycosylation is found at Asn156, Asn191, Asn213, Asn271, and Asn295. Ser311 functions as the Charge relay system in the catalytic mechanism. Asn457 carries N-linked (GlcNAc...) asparagine glycosylation.

Belongs to the AB hydrolase superfamily. Lipase family. Binds to both phosphatidylinositol (PI) and phosphatidylinositol 3,5-bisphosphate (PIP2).

It is found in the endosome. Its subcellular location is the multivesicular body membrane. The protein resides in the prevacuolar compartment membrane. The enzyme catalyses a triacylglycerol + H2O = a diacylglycerol + a fatty acid + H(+). Lipase which is essential for lysis of subvacuolar cytoplasm to vacuole targeted bodies and intravacuolar autophagic bodies. Involved in the lysis of intravacuolar multivesicular body (MVB) vesicles. The intravacuolar membrane disintegration by atg15 is critical to life span extension. This Penicillium rubens (strain ATCC 28089 / DSM 1075 / NRRL 1951 / Wisconsin 54-1255) (Penicillium chrysogenum) protein is Putative lipase atg15 (atg15).